Reading from the N-terminus, the 223-residue chain is Small ribosomal subunit protein uS5 (223 aa).

A disordered region spans residues 1–66 (MPPQQQRGRG…AERAQAETEF (66 aa)). A compositionally biased stretch (gly residues) spans 13-22 (RGPGGPGGPG). Residues 53-66 (GGDKAERAQAETEF) are compositionally biased toward basic and acidic residues. The S5 DRBM domain maps to 66–129 (FQERVVQIRR…SDARKALIRV (64 aa)).

The protein belongs to the universal ribosomal protein uS5 family. In terms of assembly, part of the 30S ribosomal subunit. Contacts proteins S4 and S8.

Its function is as follows. With S4 and S12 plays an important role in translational accuracy. Functionally, located at the back of the 30S subunit body where it stabilizes the conformation of the head with respect to the body. This is Small ribosomal subunit protein uS5 from Gloeobacter violaceus (strain ATCC 29082 / PCC 7421).